Reading from the N-terminus, the 63-residue chain is MENEVVFFCRKCNHHLFAKNPMINTLKVISEMDCPNCGEEGYHNWILSHIGDSEKEKENYNWK.

The chain is SPbeta prophage-derived uncharacterized protein YotC (yotC) from Bacillus subtilis (strain 168).